The primary structure comprises 157 residues: Probable cyclic pyranopterin monophosphate synthase (157 aa).

Residues 75 to 77 and 111 to 112 each bind substrate; these read MCH and ME. Residue Asp126 is part of the active site.

The protein belongs to the MoaC family. In terms of assembly, homohexamer; trimer of dimers.

The catalysed reaction is (8S)-3',8-cyclo-7,8-dihydroguanosine 5'-triphosphate = cyclic pyranopterin phosphate + diphosphate. Its pathway is cofactor biosynthesis; molybdopterin biosynthesis. Its function is as follows. Catalyzes the conversion of (8S)-3',8-cyclo-7,8-dihydroguanosine 5'-triphosphate to cyclic pyranopterin monophosphate (cPMP). This Methanosarcina mazei (strain ATCC BAA-159 / DSM 3647 / Goe1 / Go1 / JCM 11833 / OCM 88) (Methanosarcina frisia) protein is Probable cyclic pyranopterin monophosphate synthase.